The chain runs to 276 residues: Mitochondrial outer membrane protein porin of 36 kDa (276 aa).

Belongs to the eukaryotic mitochondrial porin (TC 1.B.8.1) family.

Its subcellular location is the mitochondrion outer membrane. Its function is as follows. Forms a channel through the cell membrane that allows diffusion of small hydrophilic molecules. The channel adopts an open conformation at low or zero membrane potential and a closed conformation at potentials above 30-40 mV. The open state has a weak anion selectivity whereas the closed state is cation-selective. This Solanum tuberosum (Potato) protein is Mitochondrial outer membrane protein porin of 36 kDa.